The sequence spans 290 residues: MPSLRDIRNRIGSVKSTRQITKAMKMVSAAKLRRAQDAILKTRPYAQLLEQTLGRIAARAAADEVVAHPLLAPRAQRTAEVVVITSDRGLAGGFNANIARRTQRFLVENADRYERVQLATIGRKGRDYFRARRLEIRKDFTGVHANLAYEKAEAIAAEYTERYLSGEVDAVFLAYNEFKSAISQKPVVFQLLPIETPPDAGDGASIDFKYEPSREALLRDLLPRHVAMQVWRALLESAASEHGARMSAMESATKNAEEMIASLTLQYNRARQAYVTKELMEIVSGAEALK.

Belongs to the ATPase gamma chain family. As to quaternary structure, F-type ATPases have 2 components, CF(1) - the catalytic core - and CF(0) - the membrane proton channel. CF(1) has five subunits: alpha(3), beta(3), gamma(1), delta(1), epsilon(1). CF(0) has three main subunits: a, b and c.

The protein resides in the cell inner membrane. In terms of biological role, produces ATP from ADP in the presence of a proton gradient across the membrane. The gamma chain is believed to be important in regulating ATPase activity and the flow of protons through the CF(0) complex. This chain is ATP synthase gamma chain, found in Anaeromyxobacter sp. (strain Fw109-5).